The sequence spans 385 residues: Probable splicing factor YJU2B (385 aa).

The interval 1–26 (MGERKGQNKYYPPDFNPEKHGSLNRY) is disordered. A Phosphoserine modification is found at Ser40. The stretch at 182 to 214 (LNSMLRRHFREKKKAMQEEEEKDQALQAKASLA) forms a coiled coil. The segment at 257–385 (PSAQGPSASS…VADYSDSESE (129 aa)) is disordered. Over residues 258–271 (SAQGPSASSSKASS) the composition is skewed to low complexity. Ser306 carries the post-translational modification Phosphoserine. Positions 359-373 (GSSQEDLLNPNTPNA) are enriched in polar residues.

This sequence belongs to the CWC16 family.

Its subcellular location is the nucleus. Functionally, may be involved in mRNA splicing. This Mus musculus (Mouse) protein is Probable splicing factor YJU2B (Yju2b).